The sequence spans 2442 residues: Histone lysine acetyltransferase CREBBP (2442 aa).

Disordered stretches follow at residues 1–40 and 74–168; these read MAEN…ENDL and RGGS…PATS. An N-acetylalanine modification is found at alanine 2. Residues 20–30 show a composition bias toward polar residues; it reads PGFSANDSTDF. Serine 120 bears the Phosphoserine mark. Positions 125 to 168 are enriched in polar residues; that stretch reads GDSSTPSLPKQAASTSGPTPPASQALNPQAQKQVGLVTSSPATS. Arginine 219 bears the Omega-N-methylarginine mark. The tract at residues 226-409 is interaction with SRCAP; that stretch reads PAPAMQGATS…GKACQVAHCA (184 aa). A compositionally biased stretch (low complexity) spans 261 to 272; the sequence is GGMTKMGMTGNT. The segment at 261 to 290 is disordered; the sequence is GGMTKMGMTGNTSPFGQPFSQTGGQPMGAT. A compositionally biased stretch (polar residues) spans 273–284; it reads SPFGQPFSQTGG. The segment at 346–432 adopts a TAZ-type 1 zinc-finger fold; it reads DPEKRKLIQQ…RHDCPVCLPL (87 aa). Positions 362, 366, 379, 384, 393, 397, 403, 408, 417, 421, 426, and 429 each coordinate Zn(2+). In terms of domain architecture, KIX spans 586–665; the sequence is GVRKGWHEHV…KIYKIQKELE (80 aa). Residues arginine 600 and arginine 624 each carry the asymmetric dimethylarginine modification. At lysine 656 the chain carries N6-acetyllysine. Over residues 792–825 the composition is skewed to polar residues; sequence FLPQNQFPSSSGAMSVNSVGMGQPATQAGVSQGQ. The segment at 792-1084 is disordered; it reads FLPQNQFPSS…STSPSQPRKK (293 aa). Composition is skewed to pro residues over residues 846 to 862 and 874 to 887; these read PCPP…PPPA and PTPP…PAAP. Positions 894–906 are enriched in polar residues; the sequence is VSSGQTPTPTPGS. Composition is skewed to low complexity over residues 909–930 and 938–957; these read SAAQ…VTPQ and PSVA…HTQP. Residues 974-989 are compositionally biased toward polar residues; that stretch reads PTPSSVTSAETSSQQP. Residue lysine 999 forms a Glycyl lysine isopeptide (Lys-Gly) (interchain with G-Cter in SUMO1) linkage. Residues 1012-1022 are compositionally biased toward basic and acidic residues; the sequence is AESKGEPRSEM. Residue lysine 1015 is modified to N6-acetyllysine. Serine 1031 is subject to Phosphoserine. Basic and acidic residues predominate over residues 1033-1060; sequence VKEETDTTEQKSEPMEVEEKKPEVKVEA. Residues lysine 1034 and lysine 1057 each participate in a glycyl lysine isopeptide (Lys-Gly) (interchain with G-Cter in SUMO1) cross-link. The span at 1067-1080 shows a compositional bias: polar residues; the sequence is SANGTASQSTSPSQ. Serine 1077 bears the Phosphoserine mark. Residues 1086-1193 enclose the Bromo domain; it reads FKPEELRQAL…EVFEQEIDPV (108 aa). Positions 1125 to 1171 are interaction with histone; sequence DYFDIVKNPMDLSTIKRKLDTGQYQEPWQYVDDVWLMFNNAWLYNRK. Residues 1163-1181 are interaction with ASF1A; it reads NNAWLYNRKTSRVYKFCSK. An N6-acetyllysine modification is found at lysine 1217. Positions 1324–1701 constitute a CBP/p300-type HAT domain; the sequence is KFSAKRLQTT…MLVELHTQGQ (378 aa). Phosphoserine; by IKKA occurs at positions 1383 and 1387. Positions 1434-1436 are interaction with histone; sequence YLD. Residues 1435 to 1437, 1447 to 1448, isoleucine 1494, arginine 1499, and tryptophan 1503 contribute to the acetyl-CoA site; these read LDS and RT. Positions 1548–1575 form a coiled coil; it reads NVLEESIKELEQEEEERKKEESTAASET. A compositionally biased stretch (basic and acidic residues) spans 1557 to 1569; the sequence is LEQEEEERKKEES. Residues 1557–1616 are disordered; that stretch reads LEQEEEERKKEESTAASETPEGSQGDSKNAKKKNNKKTNKNKSSISRANKKKPSMPNVSN. N6-acetyllysine occurs at positions 1584, 1592, 1593, 1596, and 1598. Over residues 1586 to 1596 the composition is skewed to basic residues; that stretch reads AKKKNNKKTNK. Residues 1703-1751 form a ZZ-type zinc finger; sequence RFVYTCNECKHHVETRWHCTVCEDYDLCINCYNTKSHTHKMVKWGLGLD. Residues cysteine 1708, cysteine 1711, cysteine 1721, cysteine 1724, cysteine 1730, cysteine 1733, histidine 1739, and histidine 1741 each coordinate Zn(2+). 2 positions are modified to N6-acetyllysine: lysine 1742 and lysine 1745. A Phosphoserine modification is found at serine 1764. A TAZ-type 2 zinc finger spans residues 1766–1847; that stretch reads QESRRLSIQR…KCPVPFCLNI (82 aa). A disordered region spans residues 1875 to 1960; it reads TRNVPQQSLP…QPPPAAVEAA (86 aa). Pro residues-rich tracts occupy residues 1901–1913 and 1944–1955; these read PQTP…PQPS and PAPPPPAQPPPA. 3 positions are modified to phosphoserine: serine 2064, serine 2077, and serine 2080. Residues 2112–2421 are disordered; it reads NQPGMQPQPG…LNTPNRSALS (310 aa). 4 stretches are compositionally biased toward low complexity: residues 2113 to 2138, 2197 to 2217, 2261 to 2280, and 2287 to 2305; these read QPGM…HQQP, QLLQ…QQQQ, MGQM…PGLG, and IQQA…KQQI. Polar residues-rich tracts occupy residues 2315–2327 and 2334–2343; these read SPQQ…QPQA and QIATSLSNQV. A compositionally biased stretch (pro residues) spans 2349–2372; that stretch reads VQSPRPQSQPPHSSPSPRIQPQPS. Residue serine 2351 is modified to Phosphoserine. Over residues 2411 to 2421 the composition is skewed to polar residues; that stretch reads QLNTPNRSALS.

As to quaternary structure, part of a complex composed of MSX3, CREBBP/CBP AND EP300/p300; the interaction with MSX3 decreases histone acetylation activity. Found in a complex containing NCOA2; NCOA3; IKKA; IKKB and IKBKG. Probably part of a complex with HIF1A and EP300. Interacts with phosphorylated CREB1. Interacts with the C-terminal region of CITED4. The TAZ-type 1 domain interacts with HIF1A. Interacts with SRCAP, CARM1, ELF3, MLLT7/FOXO4, N4BP2, NCOA1, NCOA3, NCOA6, PCAF, DDX5, DDX17, PELP1, PML, SMAD1, SMAD2, SMAD3, SPIB, TRERF1 and ZCCHC12. Interacts with KLF1; the interaction results in acetylation and enhancement of transcriptional activity of KLF1. Interacts with DAXX; the interaction is dependent on CBP sumoylation and results in suppression of the transcriptional activity via recruitment of HDAC2 to DAXX. Interacts with MAF. Interacts with MTDH. Interacts with MAFG; the interaction acetylates MAFG in the basic region and stimulates NFE2 transcriptional activity through increasing its DNA-binding activity. Interacts with IRF2; the interaction acetylates IRF2 and regulates its activity on the H4 promoter. Interacts (via N-terminus) with SS18L1/CREST (via C-terminus). Interacts with IRF3 (when phosphorylated); forming the dsRNA-activated factor 1 (DRAF1), a complex which activates the transcription of the type I interferon genes. Interacts with MECOM. Interacts with CITED1 (via C-terminus) Interacts with GATA1; the interaction results in acetylation and enhancement of transcriptional activity of GATA1. Interacts with FOXO1; the interaction acetylates FOXO1 and inhibits its transcriptional activity. Interacts with NPAS2, CLOCK and BMAL1. Interacts with ASF1A and ASF1B; this promotes histone acetylation. Interacts with acetylated TP53/p53 and with the acetylated histones H3 and H4. Interacts (via transactivation domain and C-terminus) with PCNA; the interaction occurs on chromatin in UV-irradiated damaged cells. Interacts with DHX9 (via N-terminus); this interaction mediates association with RNA polymerase II holoenzyme and stimulates CREB-dependent transcriptional activation. Interacts with SMAD4; negatively regulated by ZBTB7A. Forms a complex with KMT2A and CREB1. Interacts with DDX3X; this interaction may facilitate HNF4A acetylation. Interacts with MSX1; the interaction may inhibit MSX1 autoinactivation. Interacts with MSX3. Interacts with ACSS2. Methylation of the KIX domain by CARM1 blocks association with CREB. This results in the blockade of CREB signaling, and in activation of apoptotic response. Post-translationally, phosphorylated by CHUK/IKKA at Ser-1383 and Ser-1387; these phosphorylations promote cell growth by switching the binding preference of CREBBP from TP53 to NF-kappa-B. In terms of processing, sumoylation negatively regulates transcriptional activity via the recruitment of DAAX. Autoacetylation is required for binding to protein substrates, such as acetylated histones and acetylated TP53/p53. Autoacetylation is induced by glucose and fatty acids. Expressed in hypothalamus and cortex.

Its subcellular location is the cytoplasm. It localises to the nucleus. It carries out the reaction L-lysyl-[histone] + acetyl-CoA = N(6)-acetyl-L-lysyl-[histone] + CoA + H(+). The catalysed reaction is L-lysyl-[protein] + acetyl-CoA = N(6)-acetyl-L-lysyl-[protein] + CoA + H(+). It catalyses the reaction (S)-lactoyl-CoA + L-lysyl-[protein] = N(6)-[(S)-lactoyl]-L-lysyl-[protein] + CoA + H(+). Functionally, acetylates histones, giving a specific tag for transcriptional activation. Mediates acetylation of histone H3 at 'Lys-18' and 'Lys-27' (H3K18ac and H3K27ac, respectively). Also acetylates non-histone proteins, like DDX21, FBL, IRF2, MAFG, NCOA3, POLR1E/PAF53 and FOXO1. Binds specifically to phosphorylated CREB and enhances its transcriptional activity toward cAMP-responsive genes. Acts as a coactivator of ALX1. Acts as a circadian transcriptional coactivator which enhances the activity of the circadian transcriptional activators: NPAS2-BMAL1 and CLOCK-BMAL1 heterodimers. Acetylates PCNA; acetylation promotes removal of chromatin-bound PCNA and its degradation during nucleotide excision repair (NER). Acetylates POLR1E/PAF53, leading to decreased association of RNA polymerase I with the rDNA promoter region and coding region. Acetylates DDX21, thereby inhibiting DDX21 helicase activity. Acetylates FBL, preventing methylation of 'Gln-105' of histone H2A (H2AQ104me). In addition to protein acetyltransferase, can use different acyl-CoA substrates, such as lactoyl-CoA, and is able to mediate protein lactylation. Catalyzes lactylation of MRE11 in response to DNA damage, thereby promoting DNA double-strand breaks (DSBs) via homologous recombination (HR). Functions as a transcriptional coactivator for SMAD4 in the TGF-beta signaling pathway. The chain is Histone lysine acetyltransferase CREBBP (Crebbp) from Rattus norvegicus (Rat).